The sequence spans 325 residues: Protein VP6-B (325 aa).

2 disordered regions span residues 23–123 (INLI…TIGA) and 176–229 (VAEQ…EEQA). Basic and acidic residues-rich tracts occupy residues 32-52 (ESGK…ESKD) and 61-79 (SQKK…DRRI). Residues 106–123 (KVGGGGGNADAGVGTIGA) are compositionally biased toward gly residues. Basic and acidic residues-rich tracts occupy residues 176-201 (VAEQ…AAER) and 210-226 (PHGD…KTSE).

The protein belongs to the orbivirus VP6 family.

It localises to the virion. Its function is as follows. Surrounds and interacts with the genomic dsRNA. Possesses ss- and dsRNA-binding capacity. Its hydrophilic nature and capability to bind ss- and dsRNA suggest that it interacts with BTV genomic RNA. The protein is Protein VP6-B (Segment-9) of Bluetongue virus 10 (isolate USA) (BTV 10).